Consider the following 691-residue polypeptide: Protein-glutamine gamma-glutamyltransferase E (691 aa).

Tyr-110 carries the post-translational modification Phosphotyrosine. Position 111 is a phosphothreonine (Thr-111). Residues Ala-221, Asn-224, Asn-226, and Asp-227 each coordinate Ca(2+). Cys-272 is an active-site residue. Residues Asp-301, Asp-303, Asn-305, Ser-307, and Asp-324 each contribute to the Ca(2+) site. Residues His-330 and Asp-353 contribute to the active site. Positions 393, 414, 442, and 447 each coordinate Ca(2+).

This sequence belongs to the transglutaminase superfamily. Transglutaminase family. As to quaternary structure, consists of two polypeptide chains, which are synthesized as a precursor form of a single polypeptide. Requires Ca(2+) as cofactor. In terms of processing, activated by proteolytic processing. In vitro activation is commonly achieved by cleavage with dispase, a neutral bacterial protease. Physiological activation may be catalyzed by CTSL and, to a lesser extent, by CTSS.

It is found in the cytoplasm. It carries out the reaction L-glutaminyl-[protein] + L-lysyl-[protein] = [protein]-L-lysyl-N(6)-5-L-glutamyl-[protein] + NH4(+). Its function is as follows. Catalyzes the calcium-dependent formation of isopeptide cross-links between glutamine and lysine residues in various proteins, as well as the conjugation of polyamines to proteins. Involved in the formation of the cornified envelope (CE), a specialized component consisting of covalent cross-links of proteins beneath the plasma membrane of terminally differentiated keratinocytes. Catalyzes small proline-rich proteins and LOR cross-linking to form small interchain oligomers, which are further cross-linked by TGM1 onto the growing CE scaffold. In hair follicles, involved in cross-linking structural proteins to hardening the inner root sheath. The sequence is that of Protein-glutamine gamma-glutamyltransferase E (TGM3) from Bos taurus (Bovine).